Consider the following 281-residue polypeptide: MIENRPWLTIFSHTMLILGIAVILFPLYVAFVAATLDKQAVYAAPMTLIPGTHLLENIHNIWVNGVGTNSAPFWRMLLNSFVMAFSITLGKITVSMLSAFAIVWFRFPLRNLFFWMIFITLMLPVEVRIFPTVEVIANLQMLDSYAGLTLPLMASATATFLFRQFFMTLPDELVEAARIDGASPMRFFCDIVFPLSKTNLAALFVITFIYGWNQYLWPLLIITDVDLGTTVAGIKGMIATGEGTTEWNSVMVAMLLTLIPPVVIVLVMQRAFVRGLVDSEK.

The next 6 helical transmembrane spans lie at 16–36 (LILG…AATL), 85–105 (FSIT…IVWF), 113–133 (FFWM…FPTV), 142–162 (LDSY…TFLF), 202–222 (ALFV…LLII), and 247–267 (WNSV…IVLV). Residues 77 to 268 (LLNSFVMAFS…IPPVVIVLVM (192 aa)) form the ABC transmembrane type-1 domain.

Belongs to the binding-protein-dependent transport system permease family. UgpAE subfamily. The complex is composed of two ATP-binding proteins (UgpC), two transmembrane proteins (UgpA and UgpE) and a solute-binding protein (UgpB).

It localises to the cell inner membrane. Functionally, part of the ABC transporter complex UgpBAEC involved in sn-glycerol-3-phosphate (G3P) import. Probably responsible for the translocation of the substrate across the membrane. Can also transport glycerophosphoryl diesters, which are hydrolyzed to G3P and alcohol during transport. The G3P moiety can be detected in the cytoplasm whereas the corresponding alcohol is usually found in the culture medium. It was proposed by Yang et al that the complex could also transport glycerol-2-phosphate (G2P) in vivo, but it was shown later by Wuttge et al that UgpB does not bind G2P, questioning this transport activity. G2P might be converted in the periplasm to G3P before its transport. This is sn-glycerol-3-phosphate transport system permease protein UgpE from Escherichia coli (strain K12).